Here is a 454-residue protein sequence, read N- to C-terminus: Putative serine/threonine-protein phosphatase C27B7.6 (454 aa).

4 residues coordinate Mn(2+): aspartate 65, histidine 67, aspartate 93, and asparagine 125. Histidine 126 (proton donor) is an active-site residue. The Mn(2+) site is built by histidine 174 and histidine 252. Positions 414-454 (RKKLGMTTSTTPPPPRTPSPDAPLAQSPPIPRSPPSSTENA) are disordered. A compositionally biased stretch (pro residues) spans 424–447 (TPPPPRTPSPDAPLAQSPPIPRSP).

This sequence belongs to the PPP phosphatase family. PP-1 subfamily. Requires Mn(2+) as cofactor.

It catalyses the reaction O-phospho-L-seryl-[protein] + H2O = L-seryl-[protein] + phosphate. The enzyme catalyses O-phospho-L-threonyl-[protein] + H2O = L-threonyl-[protein] + phosphate. The protein is Putative serine/threonine-protein phosphatase C27B7.6 of Caenorhabditis elegans.